Here is a 382-residue protein sequence, read N- to C-terminus: Glutamine synthetase cytosolic isozyme (382 aa).

The 83-residue stretch at 36–118 (GKICAEYVWI…VMCDCYEPPK (83 aa)) folds into the GS beta-grasp domain. Positions 135 to 382 (TRFACAEVME…RLIVETTILL (248 aa)) constitute a GS catalytic domain.

It belongs to the glutamine synthetase family. Homooctamer.

It localises to the cytoplasm. It carries out the reaction L-glutamate + NH4(+) + ATP = L-glutamine + ADP + phosphate + H(+). In Chlamydomonas reinhardtii (Chlamydomonas smithii), this protein is Glutamine synthetase cytosolic isozyme (GLN1).